The following is a 339-amino-acid chain: Serpentine receptor class r-10 (339 aa).

Topologically, residues 1–11 (MSGELWITLVD) are extracellular. A helical membrane pass occupies residues 12–32 (TADIVGVTLTFCVNIVLLGLL). At 33–42 (KTRGKNLGTY) the chain is on the cytoplasmic side. A helical membrane pass occupies residues 43–63 (KYLMAFFSVFSIFYAIIEFIL). Over 64-92 (RPIMHIENTTFFLISRKRFNYSTKLGKIN) the chain is Extracellular. 2 N-linked (GlcNAc...) asparagine glycosylation sites follow: Asn-71 and Asn-83. A helical membrane pass occupies residues 93 to 113 (SAFYCACFATSFVVSGVHFVY). Residues 114-131 (RYFATCKPNLLRLFNLPT) are Cytoplasmic-facing. Residues 132–152 (LLLWPLGCSVPVTMWASVSYF) traverse the membrane as a helical segment. Residues 153-201 (LYPDTEYTEAAVTNVLNNHYNWIKKENVSYIAYVYYQYENGVRHIYLKN) are Extracellular-facing. A glycan (N-linked (GlcNAc...) asparagine) is linked at Asn-179. A helical transmembrane segment spans residues 202-222 (LLGCFVHYFVMSMTFVVMFYC). Residues 223 to 254 (GYATWKTMNEHKDVSDRTRALQKQLFKALVLQ) lie on the Cytoplasmic side of the membrane. Residues 255–275 (TLIPTIFMYAPTGVMFIAPFF) traverse the membrane as a helical segment. The Extracellular portion of the chain corresponds to 276 to 284 (DVNLNANAN). A helical transmembrane segment spans residues 285–305 (FIVFCSFLYPGLDPLILILII). At 306–339 (RDFRRTIFNFLCGKKNSVDESRSTTRANLSQVPT) the chain is on the cytoplasmic side.

Belongs to the nematode receptor-like protein str family. In terms of assembly, interacts with odr-4. As to expression, strongly expressed in the sensory cilia of AWA olfactory neurons, and at low levels in the CEP neurons.

Its subcellular location is the cell projection. The protein resides in the cilium membrane. In terms of biological role, an odorant receptor which affects chemotaxis to the volatile odorant diacetyl. Specifies AWA neuronal cell fate via the odr-7 pathway. In Caenorhabditis elegans, this protein is Serpentine receptor class r-10.